The sequence spans 117 residues: UPF0145 protein PH1682 (117 aa).

This sequence belongs to the UPF0145 family.

The sequence is that of UPF0145 protein PH1682 from Pyrococcus horikoshii (strain ATCC 700860 / DSM 12428 / JCM 9974 / NBRC 100139 / OT-3).